Reading from the N-terminus, the 820-residue chain is G-type lectin S-receptor-like serine/threonine-protein kinase At1g11280 (820 aa).

An N-terminal signal peptide occupies residues 1 to 28; sequence MGIHLGEIGIVLFPWFLWLSLFLSCGYA. The Bulb-type lectin domain occupies 29–148; it reads AITISSPLTL…VSENLLWQSF (120 aa). Residues 29–434 are Extracellular-facing; the sequence is AITISSPLTL…SELAGSRRTK (406 aa). N-linked (GlcNAc...) asparagine glycans are attached at residues Asn57, Asn92, Asn98, Asn241, and Asn272. Positions 283–319 constitute an EGF-like domain; sequence PANLCDLYGACGPFGLCVTSNPTKCKCMKGFVPKYKE. Intrachain disulfides connect Cys287–Cys299 and Cys293–Cys307. Residues Asn325, Asn341, and Asn384 are each glycosylated (N-linked (GlcNAc...) asparagine). Residues 338–422 enclose the PAN domain; the sequence is CQANLSTKTQ…VGGEFLSIRL (85 aa). 2 disulfide bridges follow: Cys377/Cys398 and Cys381/Cys387. A helical transmembrane segment spans residues 435–455; it reads IIVGSISLSIFVILAFGSYKY. At 456–820 the chain is on the cytoplasmic side; it reads WRYRAKQNVG…HVTQTEIYGR (365 aa). The Protein kinase domain maps to 505-792; sequence FNVSNKLGQG…DLPRPKQPLF (288 aa). Residues 511-519 and Lys533 each bind ATP; that span reads LGQGGFGPV. 2 positions are modified to phosphoserine: Ser539 and Ser554. The interval 594-611 is caM-binding; the sequence is TLKLQIDWPKRFNIIQGV. The active-site Proton acceptor is the Asp630. Residues Ser634 and Ser647 each carry the phosphoserine modification. Thr664 carries the post-translational modification Phosphothreonine. Ser707, Ser708, and Ser808 each carry phosphoserine. Thr815 carries the phosphothreonine modification.

It belongs to the protein kinase superfamily. Ser/Thr protein kinase family.

Its subcellular location is the cell membrane. It catalyses the reaction L-seryl-[protein] + ATP = O-phospho-L-seryl-[protein] + ADP + H(+). The enzyme catalyses L-threonyl-[protein] + ATP = O-phospho-L-threonyl-[protein] + ADP + H(+). The protein is G-type lectin S-receptor-like serine/threonine-protein kinase At1g11280 of Arabidopsis thaliana (Mouse-ear cress).